A 159-amino-acid chain; its full sequence is MQLTHLNKQNNPTMVDVSDKHITTREAYASGVISMSEQAFESAINHTGKKGPITQTAIIAAIMGSKKTSEIIPMCHPLMINKINVDITPNPAEHSITLGVLVKCEGKTGVEMEALTGVSIGLLTIYDMLKAIDKSMVISDIALQSKSGGKSGDFVREDS.

Substrate-binding positions include 74-76 and 112-113; these read MCH and ME. The active site involves aspartate 127.

It belongs to the MoaC family. As to quaternary structure, homohexamer; trimer of dimers.

The enzyme catalyses (8S)-3',8-cyclo-7,8-dihydroguanosine 5'-triphosphate = cyclic pyranopterin phosphate + diphosphate. Its pathway is cofactor biosynthesis; molybdopterin biosynthesis. Functionally, catalyzes the conversion of (8S)-3',8-cyclo-7,8-dihydroguanosine 5'-triphosphate to cyclic pyranopterin monophosphate (cPMP). In Helicobacter hepaticus (strain ATCC 51449 / 3B1), this protein is Cyclic pyranopterin monophosphate synthase.